The sequence spans 157 residues: uncharacterized protein (157 aa).

Over residues 1-11 (MGDLEGQDRPD) the composition is skewed to basic and acidic residues. Residues 1-22 (MGDLEGQDRPDPISTMVGPSGT) form a disordered region.

It localises to the mitochondrion. This is an uncharacterized protein from Arabidopsis thaliana (Mouse-ear cress).